We begin with the raw amino-acid sequence, 407 residues long: Methylthioribose kinase (407 aa).

ATP-binding positions include asparagine 40, lysine 57, and 111–113 (EDL). Aspartate 229 provides a ligand contact to substrate. ATP is bound at residue 246–248 (DAE). Arginine 344 contacts substrate.

It belongs to the methylthioribose kinase family. As to quaternary structure, homodimer.

The enzyme catalyses 5-(methylsulfanyl)-D-ribose + ATP = 5-(methylsulfanyl)-alpha-D-ribose 1-phosphate + ADP + H(+). The protein operates within amino-acid biosynthesis; L-methionine biosynthesis via salvage pathway; S-methyl-5-thio-alpha-D-ribose 1-phosphate from S-methyl-5'-thioadenosine (hydrolase route): step 2/2. Functionally, catalyzes the phosphorylation of methylthioribose into methylthioribose-1-phosphate. This Yersinia pestis bv. Antiqua (strain Angola) protein is Methylthioribose kinase.